Here is a 632-residue protein sequence, read N- to C-terminus: Biosynthetic arginine decarboxylase (632 aa).

Residue Lys-101 is modified to N6-(pyridoxal phosphate)lysine. 281-291 is a binding site for substrate; sequence FDVGGGLGVDY.

It belongs to the Orn/Lys/Arg decarboxylase class-II family. SpeA subfamily. Requires Mg(2+) as cofactor. The cofactor is pyridoxal 5'-phosphate.

It carries out the reaction L-arginine + H(+) = agmatine + CO2. It participates in amine and polyamine biosynthesis; agmatine biosynthesis; agmatine from L-arginine: step 1/1. In terms of biological role, catalyzes the biosynthesis of agmatine from arginine. This is Biosynthetic arginine decarboxylase from Salmonella agona (strain SL483).